We begin with the raw amino-acid sequence, 144 residues long: Transcriptional regulator SlyA (144 aa).

Residues 2–135 (ESPLGSDLAR…LNKIISKLEK (134 aa)) form the HTH marR-type domain. Residues 49-72 (QIQLAKAIGIEQPSLVRTLDQLEE) constitute a DNA-binding region (H-T-H motif).

It belongs to the SlyA family. Homodimer.

Its function is as follows. Transcription regulator that can specifically activate or repress expression of target genes. In Blochmanniella pennsylvanica (strain BPEN), this protein is Transcriptional regulator SlyA.